The primary structure comprises 144 residues: Maximins 10/H15 (144 aa).

An N-terminal signal peptide occupies residues 1-18 (MNFKYIVAVSFLIASAYA). Residues 19-43 (RSVQNDEQSLSQRDVLEEESLREIR) constitute a propeptide that is removed on maturation. Ser70 carries the serine amide modification. Positions 74-123 (TAEDHEVMKRLEAVMRDLDSLDYPEEATERETRGFNQEEIANLFTKKEKR) are excised as a propeptide. Leu143 carries the leucine amide modification.

Belongs to the bombinin family. In terms of tissue distribution, expressed by the skin glands.

The protein localises to the secreted. Functionally, maximin-10 shows antimicrobial activity against bacteria and against the fungus C.albicans. It has little hemolytic activity. Its function is as follows. Maximin-H15 shows antimicrobial activity against bacteria and against the fungus C.albicans. Shows strong hemolytic activity. This Bombina maxima (Giant fire-bellied toad) protein is Maximins 10/H15.